The sequence spans 144 residues: Large ribosomal subunit protein uL15 (144 aa).

A disordered region spans residues 1–54; the sequence is MKLNTIKPAEGAKHARRRVGRGIGSGLGKTGGRGHKGQKSRAGGFHKVGFEGGQ. Gly residues predominate over residues 21 to 31; the sequence is RGIGSGLGKTG.

The protein belongs to the universal ribosomal protein uL15 family. In terms of assembly, part of the 50S ribosomal subunit.

Functionally, binds to the 23S rRNA. This Methylobacillus flagellatus (strain ATCC 51484 / DSM 6875 / VKM B-1610 / KT) protein is Large ribosomal subunit protein uL15.